The sequence spans 572 residues: Galectin-3-binding protein B (572 aa).

Residues 1–14 (MLLLWPLLFLQVSA) form the signal peptide. The region spanning 32–131 (VRLVGVIPSS…HKEDAGVICA (100 aa)) is the SRCR domain. Cystine bridges form between Cys56–Cys120, Cys69–Cys130, and Cys100–Cys110. Residues Asn135, Asn195, and Asn202 are each glycosylated (N-linked (GlcNAc...) asparagine). The BTB domain occupies 164–231 (CDFTIAVRDL…LYTRQIDVST (68 aa)). A BACK domain is found at 270 to 372 (QVSMYEYGVR…IPVDKLYDIQ (103 aa)). 2 N-linked (GlcNAc...) asparagine glycosylation sites follow: Asn430 and Asn548.

Its subcellular location is the secreted. The protein localises to the extracellular space. The protein resides in the extracellular matrix. Promotes integrin-mediated cell adhesion. The protein is Galectin-3-binding protein B (lgals3bpb) of Danio rerio (Zebrafish).